Reading from the N-terminus, the 459-residue chain is Zeatin O-glucosyltransferase (459 aa).

His26 (proton acceptor) is an active-site residue. His26 is an an anthocyanidin binding site. Asp125 serves as the catalytic Charge relay. Positions 148, 335, 337, 352, 355, 356, 357, 360, 376, and 377 each coordinate UDP-alpha-D-glucose.

Belongs to the UDP-glycosyltransferase family.

The enzyme catalyses trans-zeatin + UDP-alpha-D-glucose = O-beta-D-glucosyl-trans-zeatin + UDP + H(+). Its function is as follows. May regulate active versus storage forms of cytokinins, and could have an impact on seed growth. Can also use UDP-xylose to catalyze the formation of O-xylosylzeatin but at much lower affinity. The chain is Zeatin O-glucosyltransferase from Phaseolus lunatus (Lima bean).